The sequence spans 292 residues: Pantothenate synthetase (292 aa).

32 to 39 serves as a coordination point for ATP; it reads MGFLHEGH. Catalysis depends on His-39, which acts as the Proton donor. Gln-63 is a binding site for (R)-pantoate. Gln-63 is a binding site for beta-alanine. An ATP-binding site is contributed by 150 to 153; it reads GEKD. Gln-156 is a binding site for (R)-pantoate. Residues Val-179 and 187–190 each bind ATP; that span reads MSSR.

It belongs to the pantothenate synthetase family. Homodimer.

The protein resides in the cytoplasm. The enzyme catalyses (R)-pantoate + beta-alanine + ATP = (R)-pantothenate + AMP + diphosphate + H(+). Its pathway is cofactor biosynthesis; (R)-pantothenate biosynthesis; (R)-pantothenate from (R)-pantoate and beta-alanine: step 1/1. In terms of biological role, catalyzes the condensation of pantoate with beta-alanine in an ATP-dependent reaction via a pantoyl-adenylate intermediate. The sequence is that of Pantothenate synthetase from Myxococcus xanthus (strain DK1622).